A 573-amino-acid chain; its full sequence is Protein phosphatase EYA3 (573 aa).

The residue at position 1 (M1) is an N-acetylmethionine. Disordered regions lie at residues 1–46 and 236–296; these read MEEE…LASN and TYQS…DATS. Over residues 20-46 the composition is skewed to polar residues; sequence SGEQTISQVSNPDVSDQKPETSSLASN. Over residues 254–271 the composition is skewed to low complexity; sequence LSSGDPSTSPSLSQTTPS. S262 and S266 each carry phosphoserine. D309 functions as the Nucleophile in the catalytic mechanism. The Mg(2+) site is built by D309 and D311. Residue D311 is the Proton donor of the active site. Phosphoserine is present on residues S438 and S472. D537 is a binding site for Mg(2+).

This sequence belongs to the HAD-like hydrolase superfamily. EYA family. As to quaternary structure, interacts with SIX1 and DACH1, and probably SIX2, SIX4, SIX5. It depends on Mg(2+) as a cofactor. In terms of processing, ser-266 phosphorylation is required for localization at sites of DNA damage and directing interaction with H2AX.

It is found in the cytoplasm. It localises to the nucleus. It carries out the reaction O-phospho-L-tyrosyl-[protein] + H2O = L-tyrosyl-[protein] + phosphate. Tyrosine phosphatase that specifically dephosphorylates 'Tyr-142' of histone H2AX (H2AXY142ph). 'Tyr-142' phosphorylation of histone H2AX plays a central role in DNA repair and acts as a mark that distinguishes between apoptotic and repair responses to genotoxic stress. Promotes efficient DNA repair by dephosphorylating H2AX, promoting the recruitment of DNA repair complexes containing MDC1. Its function as histone phosphatase probably explains its role in transcription regulation during organogenesis. Coactivates SIX1, and seems to coactivate SIX2, SIX4 and SIX5. The repression of precursor cell proliferation in myoblasts by SIX1 is switched to activation through recruitment of EYA3 to the SIX1-DACH1 complex and seems to be dependent on EYA3 phosphatase activity. May be involved in development of the eye. In Homo sapiens (Human), this protein is Protein phosphatase EYA3 (EYA3).